The primary structure comprises 1080 residues: Carbamoyl phosphate synthase large chain (1080 aa).

Residues 1–403 (MPKRTDLRTI…SLQKAVRGLE (403 aa)) form a carboxyphosphate synthetic domain region. Positions 129, 169, 175, 176, 208, 210, 215, 241, 242, 243, 285, and 299 each coordinate ATP. The ATP-grasp 1 domain occupies 133 to 328 (RVAMQEIGLE…IAKIAAKLAV (196 aa)). Gln285, Glu299, and Asn301 together coordinate Mg(2+). Residues Gln285, Glu299, and Asn301 each contribute to the Mn(2+) site. Residues 404–554 (TGKVGLEPTG…YSTYEEECEA (151 aa)) are oligomerization domain. Residues 555–942 (APSDRRKIMI…AFARAQEAGD (388 aa)) are carbamoyl phosphate synthetic domain. The ATP-grasp 2 domain maps to 679-876 (QRLVQQLGLR…LAKIAARCMT (198 aa)). Residues Arg715, Arg754, Leu756, Glu761, Gly787, Val788, His789, Ser790, Gln830, and Glu847 each contribute to the ATP site. Residues Gln830, Glu847, and Asn849 each coordinate Mg(2+). 3 residues coordinate Mn(2+): Gln830, Glu847, and Asn849. In terms of domain architecture, MGS-like spans 943–1080 (IRAPQPGRAF…LQELHKELQV (138 aa)). The segment at 943–1080 (IRAPQPGRAF…LQELHKELQV (138 aa)) is allosteric domain.

Belongs to the CarB family. As to quaternary structure, composed of two chains; the small (or glutamine) chain promotes the hydrolysis of glutamine to ammonia, which is used by the large (or ammonia) chain to synthesize carbamoyl phosphate. Tetramer of heterodimers (alpha,beta)4. It depends on Mg(2+) as a cofactor. The cofactor is Mn(2+).

The catalysed reaction is hydrogencarbonate + L-glutamine + 2 ATP + H2O = carbamoyl phosphate + L-glutamate + 2 ADP + phosphate + 2 H(+). The enzyme catalyses hydrogencarbonate + NH4(+) + 2 ATP = carbamoyl phosphate + 2 ADP + phosphate + 2 H(+). It participates in amino-acid biosynthesis; L-arginine biosynthesis; carbamoyl phosphate from bicarbonate: step 1/1. Its pathway is pyrimidine metabolism; UMP biosynthesis via de novo pathway; (S)-dihydroorotate from bicarbonate: step 1/3. Large subunit of the glutamine-dependent carbamoyl phosphate synthetase (CPSase). CPSase catalyzes the formation of carbamoyl phosphate from the ammonia moiety of glutamine, carbonate, and phosphate donated by ATP, constituting the first step of 2 biosynthetic pathways, one leading to arginine and/or urea and the other to pyrimidine nucleotides. The large subunit (synthetase) binds the substrates ammonia (free or transferred from glutamine from the small subunit), hydrogencarbonate and ATP and carries out an ATP-coupled ligase reaction, activating hydrogencarbonate by forming carboxy phosphate which reacts with ammonia to form carbamoyl phosphate. This Xylella fastidiosa (strain Temecula1 / ATCC 700964) protein is Carbamoyl phosphate synthase large chain.